The chain runs to 602 residues: Probable beta-glucosidase btgE (602 aa).

Positions 1–18 (MRGAFLAAAAAVAGTAMA) are cleaved as a signal peptide. 2 disordered regions span residues 61-94 (PPTLVPINTPAPEPSSSSSSEVPSVPSSESSVVT) and 116-166 (GVDA…TSFS). Over residues 74–94 (PSSSSSSEVPSVPSSESSVVT) the composition is skewed to low complexity. Over residues 152-166 (TSESPLPTPGVTSFS) the composition is skewed to polar residues. The Proton donor role is filled by Glu-443. Residue Glu-538 is the Nucleophile of the active site.

This sequence belongs to the glycosyl hydrolase 17 family.

The protein localises to the secreted. The protein resides in the cell wall. The enzyme catalyses Hydrolysis of terminal, non-reducing beta-D-glucosyl residues with release of beta-D-glucose.. It participates in glycan metabolism; cellulose degradation. In terms of biological role, beta-glucosidases are one of a number of cellulolytic enzymes involved in the degradation of cellulosic biomass. Catalyzes the last step releasing glucose from the inhibitory cellobiose. This chain is Probable beta-glucosidase btgE (btgE), found in Aspergillus flavus (strain ATCC 200026 / FGSC A1120 / IAM 13836 / NRRL 3357 / JCM 12722 / SRRC 167).